Consider the following 439-residue polypeptide: MKLWGGRFKKDLDKLMEDFNSSISFDIRLLKYDIMGSIAHAKGLYKAGVLTEEELNLIEKGLKEILEESELKEIPQDEDVHSYVERLLVEKIGDVGRKLHTGRSRNDQVATDERLYLRDEIDKIKEDLIKLIDTLKEMAETYKETIMPGYTHLQRAQPVTFGHYLLAYVEMFKRDLSRLDDMMKRVNVMPLGSGALAGTTFNIDRYYVASLLGFDDITLNSMDGVSDRDFVIEFLSFASITMMHLSRFCEELILWSTKEFDFIEMDDRFSTGSSMMPQKKNPDAAELIRGKTGRVYGDLITILTVMKGLPLAYNKDMQEDKEALFDGIDTLKMSLKVFTEMIKTIKVKTDNMEKAAKYGYMNATDFADYLVQKGIPFRTAHEIAGKVVLYAIERNLPIEELSLEELKKFSDVIEKDVYEAIDIKNILKKRKTIGSPRIF.

This sequence belongs to the lyase 1 family. Argininosuccinate lyase subfamily.

It localises to the cytoplasm. It catalyses the reaction 2-(N(omega)-L-arginino)succinate = fumarate + L-arginine. Its pathway is amino-acid biosynthesis; L-arginine biosynthesis; L-arginine from L-ornithine and carbamoyl phosphate: step 3/3. This Caldanaerobacter subterraneus subsp. tengcongensis (strain DSM 15242 / JCM 11007 / NBRC 100824 / MB4) (Thermoanaerobacter tengcongensis) protein is Argininosuccinate lyase.